The primary structure comprises 302 residues: S-crystallin SL4 (302 aa).

3 consecutive repeat copies span residues 45–54 (GGYAVQSRGD), 55–64 (GGYYVKSRGD), and 65–74 (GGYPVQGRGD). The 4 X approximate tandem repeats of G-G-Y-[AYP]-V-[QK]-[SG]-R-G-D stretch occupies residues 45–84 (GGYAVQSRGDGGYYVKSRGDGGYPVQGRGDTGYSSQTRSD). 3 short sequence motifs (cell attachment site) span residues 52-54 (RGD), 62-64 (RGD), and 72-74 (RGD). The segment at 68–92 (PVQGRGDTGYSSQTRSDDACLGQGR) is disordered. One copy of the 4; approximate repeat lies at 75–84 (TGYSSQTRSD). The Cell attachment site signature appears at 113–115 (RGD). Residues 118–205 (SDINSGLYSG…ESASRRSRNH (88 aa)) are disordered. Composition is skewed to basic and acidic residues over residues 129-166 (RMDDSCHTSESRRMDDPCGTDESRRLDVPCHSDDHYRS) and 177-192 (AEDRRGGHSDSHRIDI). The GST C-terminal domain occupies 183–302 (GHSDSHRIDI…YIKRRYQSDF (120 aa)).

The protein belongs to the GST superfamily.

Its function is as follows. S-crystallins are structural components of squids and octopi eye lens. This is S-crystallin SL4 from Nototodarus sloanii (Wellington flying squid).